Here is an 828-residue protein sequence, read N- to C-terminus: DNA gyrase subunit A (828 aa).

A Topo IIA-type catalytic domain is found at 32–497 (LPDVRDGLKP…EVLSLEDEDL (466 aa)). The active-site O-(5'-phospho-DNA)-tyrosine intermediate is Tyr120. The GyrA-box motif lies at 524 to 530 (QKRGGRG).

This sequence belongs to the type II topoisomerase GyrA/ParC subunit family. As to quaternary structure, heterotetramer, composed of two GyrA and two GyrB chains. In the heterotetramer, GyrA contains the active site tyrosine that forms a transient covalent intermediate with DNA, while GyrB binds cofactors and catalyzes ATP hydrolysis.

It is found in the cytoplasm. The catalysed reaction is ATP-dependent breakage, passage and rejoining of double-stranded DNA.. In terms of biological role, a type II topoisomerase that negatively supercoils closed circular double-stranded (ds) DNA in an ATP-dependent manner to modulate DNA topology and maintain chromosomes in an underwound state. Negative supercoiling favors strand separation, and DNA replication, transcription, recombination and repair, all of which involve strand separation. Also able to catalyze the interconversion of other topological isomers of dsDNA rings, including catenanes and knotted rings. Type II topoisomerases break and join 2 DNA strands simultaneously in an ATP-dependent manner. The polypeptide is DNA gyrase subunit A (Streptococcus pyogenes serotype M1).